Reading from the N-terminus, the 87-residue chain is Large ribosomal subunit protein bL31B (87 aa).

This sequence belongs to the bacterial ribosomal protein bL31 family. Type B subfamily. Part of the 50S ribosomal subunit.

The chain is Large ribosomal subunit protein bL31B from Halorhodospira halophila (strain DSM 244 / SL1) (Ectothiorhodospira halophila (strain DSM 244 / SL1)).